Consider the following 297-residue polypeptide: Phosphoribosylaminoimidazole-succinocarboxamide synthase (297 aa).

This sequence belongs to the SAICAR synthetase family.

It catalyses the reaction 5-amino-1-(5-phospho-D-ribosyl)imidazole-4-carboxylate + L-aspartate + ATP = (2S)-2-[5-amino-1-(5-phospho-beta-D-ribosyl)imidazole-4-carboxamido]succinate + ADP + phosphate + 2 H(+). Its pathway is purine metabolism; IMP biosynthesis via de novo pathway; 5-amino-1-(5-phospho-D-ribosyl)imidazole-4-carboxamide from 5-amino-1-(5-phospho-D-ribosyl)imidazole-4-carboxylate: step 1/2. The chain is Phosphoribosylaminoimidazole-succinocarboxamide synthase from Rhodococcus erythropolis (strain PR4 / NBRC 100887).